Here is a 63-residue protein sequence, read N- to C-terminus: MARKCEICNKGVVAGVQYSHSHRQSKRTWAPNIKKVKAIVKGTPKTVHVCTRCLRSGKVQRAI.

The protein belongs to the bacterial ribosomal protein bL28 family.

The sequence is that of Large ribosomal subunit protein bL28 from Clostridium perfringens (strain SM101 / Type A).